Consider the following 88-residue polypeptide: Meiosis expressed gene 1 protein homolog (88 aa).

It belongs to the MEIG1 family. As to quaternary structure, interacts with PACRG. Interacts with MORN3.

Functionally, essential for spermiogenesis. The chain is Meiosis expressed gene 1 protein homolog from Homo sapiens (Human).